Reading from the N-terminus, the 453-residue chain is HTH-type pyridoxine biosynthesis transcriptional regulator PdxR (453 aa).

Residues 15 to 83 (TSIPTQLTEQ…RGSGTTINPD (69 aa)) enclose the HTH gntR-type domain. Residues 43–62 (SRSLSTQLGVSRGSVVTAYD) constitute a DNA-binding region (H-T-H motif).

This sequence in the C-terminal section; belongs to the class-I pyridoxal-phosphate-dependent aminotransferase family. Pyridoxal 5'-phosphate is required as a cofactor.

Functionally, may have a regulatory function in pyridoxine biosynthesis. Is said to also have an aminotransferase activity in valine biosynthesis as a double inactivation of ilvE and pdxR results in an auxotrophic requirement for valine. The chain is HTH-type pyridoxine biosynthesis transcriptional regulator PdxR (pdxR) from Corynebacterium glutamicum (strain ATCC 13032 / DSM 20300 / JCM 1318 / BCRC 11384 / CCUG 27702 / LMG 3730 / NBRC 12168 / NCIMB 10025 / NRRL B-2784 / 534).